Consider the following 146-residue polypeptide: MIDVMQIQKILPHRYPFLLVDKIVELKTKQIVKGYKNISISDHVFMGHFPDHPIYPGVLILEGMAQTGGVLAFESMDDKVDPSSKVVYFTGIDNAKFRNPVRPGDRLDYEMSVVKNRGNLWIFEGKAFVDGQLVAEAELKAMIVDK.

Residue His48 is part of the active site.

The protein belongs to the thioester dehydratase family. FabZ subfamily.

The protein resides in the cytoplasm. The enzyme catalyses a (3R)-hydroxyacyl-[ACP] = a (2E)-enoyl-[ACP] + H2O. In terms of biological role, involved in unsaturated fatty acids biosynthesis. Catalyzes the dehydration of short chain beta-hydroxyacyl-ACPs and long chain saturated and unsaturated beta-hydroxyacyl-ACPs. The protein is 3-hydroxyacyl-[acyl-carrier-protein] dehydratase FabZ of Campylobacter lari (strain RM2100 / D67 / ATCC BAA-1060).